The sequence spans 328 residues: Phenylalanine--tRNA ligase alpha subunit (328 aa).

Glu-245 lines the Mg(2+) pocket.

It belongs to the class-II aminoacyl-tRNA synthetase family. Phe-tRNA synthetase alpha subunit type 1 subfamily. Tetramer of two alpha and two beta subunits. Mg(2+) serves as cofactor.

It localises to the cytoplasm. The catalysed reaction is tRNA(Phe) + L-phenylalanine + ATP = L-phenylalanyl-tRNA(Phe) + AMP + diphosphate + H(+). This Helicobacter pylori (strain Shi470) protein is Phenylalanine--tRNA ligase alpha subunit.